We begin with the raw amino-acid sequence, 174 residues long: NADH-ubiquinone oxidoreductase chain 6 (174 aa).

Transmembrane regions (helical) follow at residues 1 to 21 (MTYV…GFSS), 24 to 44 (SPIY…GIVL), 46 to 66 (FGGS…MLVV), 86 to 106 (VMIL…VVYM), and 151 to 171 (WLMV…IEIT).

The protein belongs to the complex I subunit 6 family. As to quaternary structure, core subunit of respiratory chain NADH dehydrogenase (Complex I) which is composed of 45 different subunits.

It localises to the mitochondrion inner membrane. It catalyses the reaction a ubiquinone + NADH + 5 H(+)(in) = a ubiquinol + NAD(+) + 4 H(+)(out). Functionally, core subunit of the mitochondrial membrane respiratory chain NADH dehydrogenase (Complex I) which catalyzes electron transfer from NADH through the respiratory chain, using ubiquinone as an electron acceptor. Essential for the catalytic activity and assembly of complex I. This Oryctolagus cuniculus (Rabbit) protein is NADH-ubiquinone oxidoreductase chain 6 (MT-ND6).